We begin with the raw amino-acid sequence, 206 residues long: 2,3-bisphosphoglycerate-dependent phosphoglycerate mutase (206 aa).

Residues 9–16 (RHGQSEWN), 22–23 (TG), R61, 88–91 (ERDY), K99, 115–116 (RR), and 159–160 (GN) contribute to the substrate site. H10 functions as the Tele-phosphohistidine intermediate in the catalytic mechanism. The active-site Proton donor/acceptor is the E88.

It belongs to the phosphoglycerate mutase family. BPG-dependent PGAM subfamily. As to quaternary structure, homodimer.

The enzyme catalyses (2R)-2-phosphoglycerate = (2R)-3-phosphoglycerate. It functions in the pathway carbohydrate degradation; glycolysis; pyruvate from D-glyceraldehyde 3-phosphate: step 3/5. In terms of biological role, catalyzes the interconversion of 2-phosphoglycerate and 3-phosphoglycerate. This Brucella abortus (strain S19) protein is 2,3-bisphosphoglycerate-dependent phosphoglycerate mutase.